The following is a 433-amino-acid chain: Beta-agarase AgaA (433 aa).

A signal peptide spans 1–20 (MRKITSILLTCVMGCTATYA). Residues 21 to 295 (ADWDGVPVPA…WVRFYKPVPI (275 aa)) form the GH16 domain. Glu-147 (nucleophile) is an active-site residue. The Proton donor role is filled by Glu-152. The 132-residue stretch at 300–431 (TTVELGNFHN…QWNGDEIRFV (132 aa)) folds into the CBM6 domain.

This sequence belongs to the glycosyl hydrolase 16 family. As to quaternary structure, monomer.

The protein resides in the periplasm. The catalysed reaction is Hydrolysis of (1-&gt;4)-beta-D-galactosidic linkages in agarose, giving the tetramer as the predominant product.. Activity is abolished by Hg(2+), Cu(2+), Pb(2+) and Zn(2+) ions, but is not affected by NaCl up to at least 1.0 M, Mg(2+), K(+) and Ca(2+). Not affected by iodoacetamide, p-chloromercuribenzoate, dithiothreitol, 2-mercaptoethanol, EDTA and sodium dodecyl sulfate. Inhibited by N-bromosuccinimide. Endo-type beta-agarase, which produces neoagarotetraose (NA4) as the main final product, with a small amount of neoagarohexaose (NA6) and neoagarobiose (NA2). The chain is Beta-agarase AgaA from Microbulbifer thermotolerans.